Reading from the N-terminus, the 152-residue chain is CASP-like protein 5B1 (152 aa).

Residues 1–11 (MKKMIGSPGTM) lie on the Cytoplasmic side of the membrane. A helical membrane pass occupies residues 12–32 (SGLILRLGQCATAAASIGVMV). At 33 to 42 (SSYDFSNYTA) the chain is on the extracellular side. The N-linked (GlcNAc...) asparagine glycan is linked to asparagine 39. A helical membrane pass occupies residues 43–63 (FCFLVASMGLQLIWSFGLACL). Residues 64-77 (DVYAIRRKSDLRSP) lie on the Cytoplasmic side of the membrane. Residues 78 to 98 (ILLSLFTVGDWVTALLALAAA) form a helical membrane-spanning segment. Over 99–131 (CSSAGVTVLFTKDTEFCRQQPALSCDRFQISVG) the chain is Extracellular. A helical membrane pass occupies residues 132–152 (LSFFNWFLAAISSHTMFWILI).

This sequence belongs to the Casparian strip membrane proteins (CASP) family. As to quaternary structure, homodimer and heterodimers. In terms of tissue distribution, expressed in leaves, exclusively in hair cells (e.g. differentiated trichomes and immature cells).

The protein resides in the cell membrane. The chain is CASP-like protein 5B1 from Arabidopsis thaliana (Mouse-ear cress).